A 377-amino-acid polypeptide reads, in one-letter code: Succinyl-diaminopimelate desuccinylase (377 aa).

H66 is a Zn(2+) binding site. D68 is an active-site residue. D99 is a Zn(2+) binding site. Catalysis depends on E133, which acts as the Proton acceptor. The Zn(2+) site is built by E134, E162, and H348.

This sequence belongs to the peptidase M20A family. DapE subfamily. In terms of assembly, homodimer. The cofactor is Zn(2+). Requires Co(2+) as cofactor.

It carries out the reaction N-succinyl-(2S,6S)-2,6-diaminopimelate + H2O = (2S,6S)-2,6-diaminopimelate + succinate. It functions in the pathway amino-acid biosynthesis; L-lysine biosynthesis via DAP pathway; LL-2,6-diaminopimelate from (S)-tetrahydrodipicolinate (succinylase route): step 3/3. Catalyzes the hydrolysis of N-succinyl-L,L-diaminopimelic acid (SDAP), forming succinate and LL-2,6-diaminopimelate (DAP), an intermediate involved in the bacterial biosynthesis of lysine and meso-diaminopimelic acid, an essential component of bacterial cell walls. This Alcanivorax borkumensis (strain ATCC 700651 / DSM 11573 / NCIMB 13689 / SK2) protein is Succinyl-diaminopimelate desuccinylase.